The chain runs to 57 residues: Small ribosomal subunit protein bS21 (57 aa).

Belongs to the bacterial ribosomal protein bS21 family.

This is Small ribosomal subunit protein bS21 from Bacillus pumilus (strain SAFR-032).